The primary structure comprises 226 residues: MALKDLPAQAQPREKLAARGPSALSDIELLAIVLRTGMAGKGVLQLAQELLQLPGRAGLSGLLQAGHADLKAIKGLGPSKCAQLLAVLELARRAMAEQLRERPALASPEAVARYLQLHLAARQHEVFAVLFLDGQHRLIALEEMFRGTLTRTSVYPREVVLRALHHHAGAVILAHNHPSGQVQASAADKAVTQNLQAALRLVDIQVLDHVIVAPGASLSMAGQGML.

The region spanning 104 to 226 (ALASPEAVAR…SLSMAGQGML (123 aa)) is the MPN domain. H175, H177, and D188 together coordinate Zn(2+). The JAMM motif motif lies at 175–188 (HNHPSGQVQASAAD).

Belongs to the UPF0758 family.

This chain is UPF0758 protein Daci_1904, found in Delftia acidovorans (strain DSM 14801 / SPH-1).